The sequence spans 467 residues: ATP-dependent protease ATPase subunit HslU (467 aa).

ATP is bound by residues valine 22 and 64–69; that span reads GVGKTE. The tract at residues 146-185 is disordered; that stretch reads KASNNSNPLESLLGGAIPNFGNNDDEEEETPTEEIKTKRS. A compositionally biased stretch (acidic residues) spans 168 to 177; it reads NDDEEEETPT. 3 residues coordinate ATP: aspartate 280, glutamate 345, and arginine 417.

The protein belongs to the ClpX chaperone family. HslU subfamily. A double ring-shaped homohexamer of HslV is capped on each side by a ring-shaped HslU homohexamer. The assembly of the HslU/HslV complex is dependent on binding of ATP.

Its subcellular location is the cytoplasm. Its function is as follows. ATPase subunit of a proteasome-like degradation complex; this subunit has chaperone activity. The binding of ATP and its subsequent hydrolysis by HslU are essential for unfolding of protein substrates subsequently hydrolyzed by HslV. HslU recognizes the N-terminal part of its protein substrates and unfolds these before they are guided to HslV for hydrolysis. The protein is ATP-dependent protease ATPase subunit HslU of Staphylococcus haemolyticus (strain JCSC1435).